Here is a 217-residue protein sequence, read N- to C-terminus: MTETFDCADPEQRSRGIVSAVGAIKAGQLVVMPTDTVYGIGADAFDSSAVAALLSAKGRGRDMPVGVLVGSWHTIEGLVYSMPDGARELIRAFWPGALSLVVVQAPSLQWDLGDAHGTVMLRMPLHPVAIELLREVGPMAVSSANISGHPPPVDAEQARSQLGDHVAVYLDAGPSEQQAGSTIVDLTGATPRVLRPGPVSTERIAEVLGVDAASLFG.

Residues S14–V199 enclose the YrdC-like domain.

This sequence belongs to the SUA5 family.

The protein localises to the cytoplasm. It carries out the reaction L-threonine + hydrogencarbonate + ATP = L-threonylcarbamoyladenylate + diphosphate + H2O. Functionally, required for the formation of a threonylcarbamoyl group on adenosine at position 37 (t(6)A37) in tRNAs that read codons beginning with adenine. Catalyzes the conversion of L-threonine, HCO(3)(-)/CO(2) and ATP to give threonylcarbamoyl-AMP (TC-AMP) as the acyladenylate intermediate, with the release of diphosphate. The protein is Putative threonylcarbamoyl-AMP synthase of Mycobacterium tuberculosis (strain CDC 1551 / Oshkosh).